A 658-amino-acid chain; its full sequence is Glycogen debranching enzyme (658 aa).

The Nucleophile role is filled by Asp336. Catalysis depends on Glu371, which acts as the Proton donor. A disordered region spans residues 459-484 (EANGEENRDGTNSNYSDNHGKEGLGG).

This sequence belongs to the glycosyl hydrolase 13 family.

It carries out the reaction Hydrolysis of (1-&gt;6)-alpha-D-glucosidic linkages to branches with degrees of polymerization of three or four glucose residues in limit dextrin.. It participates in glycan degradation; glycogen degradation. Removes maltotriose and maltotetraose chains that are attached by 1,6-alpha-linkage to the limit dextrin main chain, generating a debranched limit dextrin. The sequence is that of Glycogen debranching enzyme from Salmonella paratyphi A (strain ATCC 9150 / SARB42).